The following is a 417-amino-acid chain: Probable dihydrofolate synthetase (417 aa).

34-37 serves as a coordination point for ATP; that stretch reads GKGS. The Mg(2+) site is built by Ser-58, Glu-123, and His-151. Residues Arg-274 and Asp-289 each contribute to the ATP site.

It belongs to the folylpolyglutamate synthase family.

The enzyme catalyses 7,8-dihydropteroate + L-glutamate + ATP = 7,8-dihydrofolate + ADP + phosphate + H(+). It participates in cofactor biosynthesis; tetrahydrofolylpolyglutamate biosynthesis. Its function is as follows. Glutamate-adding enzyme which catalyzes the binding of the first glutamyl side chain to dihydropteroate. Leads to the de nove synthesis of tetrahydrofolate. de novo. The chain is Probable dihydrofolate synthetase (fol3) from Schizosaccharomyces pombe (strain 972 / ATCC 24843) (Fission yeast).